A 129-amino-acid chain; its full sequence is Serum amyloid A-1 protein (129 aa).

Positions 1-18 are cleaved as a signal peptide; it reads MKLFTGLIFCSLVLGVSS. The segment at 19–44 is important for amyloid formation; the sequence is QWYSFIGEAAQGAWDMYRAYSDMIEA. The interval 92 to 129 is disordered; it reads GDSGHGVEDSKADQAANEWGRSGKDPNHFRPPGLPDKY.

The protein belongs to the SAA family. In terms of assembly, homohexamer; dimer of trimers. Can form amyloid fibrils after partial proteolysis; the native, undenatured protein does not form amyloid fibrils (in vitro). Apolipoprotein of the HDL complex. Binds to heparin. In terms of tissue distribution, detected in liver.

Its subcellular location is the secreted. Functionally, major acute phase protein. This is Serum amyloid A-1 protein (SAA1) from Neovison vison (American mink).